Here is a 523-residue protein sequence, read N- to C-terminus: L-tyrosine:2-oxoglutarate aminotransferase ucdG (523 aa).

It belongs to the class-I pyridoxal-phosphate-dependent aminotransferase family. In terms of assembly, homodimer. Requires pyridoxal 5'-phosphate as cofactor.

It is found in the cytoplasm. The enzyme catalyses L-tyrosine + 2-oxoglutarate = 3-(4-hydroxyphenyl)pyruvate + L-glutamate. It functions in the pathway secondary metabolite biosynthesis. Nonribosomal peptide synthetase that mediates the biosynthesis of usterphenyllins and uscandidusins, p-terphenyl derivatives. Within the pathway, ucdG is probably involved in the conversion of L-tyrosine into 4-hydroxyphenylpyruvate (HPPA) as a precursor for the usterphenyllin and uscandidusin biosynthesis. UcdE further prenylates position C-14 of ring C of usterphenyllin B to form usterphenyllin A. The pathway begin with the biosynthesis of 4-hydroxyphenylpyruvate (HPPA) from L-tyrosine, possibly by the aminotransferase ucdG. The nonribosomal peptide synthetase ucdA then condenses two HPPA units to produce atromentin. The key step in this pathway is the reduction and dehydration of atromentin to form a terphenyl triol intermediate, performed by the NAD-dependent dehydrogenase ucdB. Further O-methylation by the methyltransferase ucdC forms terphenyllin carrying two methoxy moieties at C-9 and C-12, and subsequent dihydroxylation at C-3 of ring A and C-15 of ring C by the flavin-dependent oxygenase ucdD leads to 3,15-dihydroxyterphenyllin. Prenylation by ucdE at position C-5 of ring A forms usterphenyllin B, and is followed by a second prenylation at position C-14 of ring C to form usterphenyllin A. The following furan ring formation that leads to uscandidusins A and B was proven to be an unexpected spontaneous non-enzymatic reaction. The polypeptide is L-tyrosine:2-oxoglutarate aminotransferase ucdG (Aspergillus ustus).